A 78-amino-acid chain; its full sequence is Acyl carrier protein (78 aa).

Residues 2-77 (STIEERVKKI…AAIDFIQANQ (76 aa)) form the Carrier domain. O-(pantetheine 4'-phosphoryl)serine is present on Ser37.

It belongs to the acyl carrier protein (ACP) family. 4'-phosphopantetheine is transferred from CoA to a specific serine of apo-ACP by AcpS. This modification is essential for activity because fatty acids are bound in thioester linkage to the sulfhydryl of the prosthetic group.

The protein resides in the cytoplasm. It participates in lipid metabolism; fatty acid biosynthesis. Functionally, carrier of the growing fatty acid chain in fatty acid biosynthesis. This Pectobacterium atrosepticum (strain SCRI 1043 / ATCC BAA-672) (Erwinia carotovora subsp. atroseptica) protein is Acyl carrier protein.